The following is an 877-amino-acid chain: Leucine--tRNA ligase (877 aa).

A 'HIGH' region motif is present at residues 43 to 53; it reads PYPSGRIHMGH. Positions 628-632 match the 'KMSKS' region motif; it reads KMSKS. Lys-631 is an ATP binding site.

It belongs to the class-I aminoacyl-tRNA synthetase family.

The protein localises to the cytoplasm. It carries out the reaction tRNA(Leu) + L-leucine + ATP = L-leucyl-tRNA(Leu) + AMP + diphosphate. This chain is Leucine--tRNA ligase, found in Brucella abortus biovar 1 (strain 9-941).